Here is a 216-residue protein sequence, read N- to C-terminus: 3-keto-L-gulonate-6-phosphate decarboxylase UlaD (216 aa).

Residue Asp11 coordinates substrate. 2 residues coordinate Mg(2+): Glu33 and Asp62. Substrate is bound at residue Arg192.

Belongs to the HPS/KGPDC family. KGPDC subfamily. In terms of assembly, homodimer. Mg(2+) serves as cofactor.

It carries out the reaction 3-dehydro-L-gulonate 6-phosphate + H(+) = L-xylulose 5-phosphate + CO2. Its pathway is cofactor degradation; L-ascorbate degradation; D-xylulose 5-phosphate from L-ascorbate: step 2/4. In terms of biological role, catalyzes the decarboxylation of 3-keto-L-gulonate-6-P into L-xylulose-5-P. Is involved in the anaerobic L-ascorbate utilization. This is 3-keto-L-gulonate-6-phosphate decarboxylase UlaD from Escherichia coli O17:K52:H18 (strain UMN026 / ExPEC).